Here is a 295-residue protein sequence, read N- to C-terminus: Acetylglutamate kinase (295 aa).

Residues 66–67, arginine 88, and asparagine 193 each bind substrate; that span reads GG.

The protein belongs to the acetylglutamate kinase family. ArgB subfamily.

The protein resides in the cytoplasm. It catalyses the reaction N-acetyl-L-glutamate + ATP = N-acetyl-L-glutamyl 5-phosphate + ADP. It participates in amino-acid biosynthesis; L-arginine biosynthesis; N(2)-acetyl-L-ornithine from L-glutamate: step 2/4. Catalyzes the ATP-dependent phosphorylation of N-acetyl-L-glutamate. The chain is Acetylglutamate kinase from Gluconobacter oxydans (strain 621H) (Gluconobacter suboxydans).